We begin with the raw amino-acid sequence, 827 residues long: Multiple RNA-binding domain-containing protein 1 (827 aa).

An RRM 1 domain is found at 5–78 (SRIFVKNLPP…SRISVDIAKP (74 aa)). Disordered regions lie at residues 77-116 (KPIA…TAAA), 176-230 (AGLE…ATDD), and 256-299 (AASG…DPES). Over residues 179 to 189 (EDGESDDEYED) the composition is skewed to acidic residues. 2 stretches are compositionally biased toward low complexity: residues 208–225 (APLA…PVSL) and 256–270 (AASG…STSV). The span at 277–288 (KPEEHPAEDSRE) shows a compositional bias: basic and acidic residues. RRM domains follow at residues 308-384 (SRLF…PAAA), 489-560 (TTIL…KGPK), 599-682 (SSLF…ASHR), and 704-781 (TKLV…FAQA).

The protein belongs to the RRM MRD1 family.

The protein resides in the nucleus. Its function is as follows. Involved in pre-rRNA processing. The sequence is that of Multiple RNA-binding domain-containing protein 1 (mrd-1) from Neurospora crassa (strain ATCC 24698 / 74-OR23-1A / CBS 708.71 / DSM 1257 / FGSC 987).